Here is a 1976-residue protein sequence, read N- to C-terminus: Putative callose synthase 8 (1976 aa).

The Cytoplasmic portion of the chain corresponds to 1-530 (MSHEIVPVDP…FWQIFRSFDR (530 aa)). A helical membrane pass occupies residues 531–551 (MWSFFVLSLQALIIMACHDVG). The Extracellular segment spans residues 552–565 (SPLQVFNANIFEDV). A helical transmembrane segment spans residues 566–586 (MSIFITSAILKLIKGILDIIF). Over 587 to 602 (KWKARNTMPINEKKKR) the chain is Cytoplasmic. Residues 603–623 (LVKLGFAAMWTIILPVLYSHS) traverse the membrane as a helical segment. The Extracellular segment spans residues 624–648 (RRKYICYFTNYKTWLGEWCFSPYMV). The chain crosses the membrane as a helical span at residues 649–669 (AVTIYLTGSAIELVLFFVPAI). Residues 670–707 (SKYIETSNHGIFKTLSWWGQPRLYVGRGMQETQVSQFK) are Cytoplasmic-facing. Residues 708 to 728 (YTFFWILVLLTKFAFSYAFEI) traverse the membrane as a helical segment. At 729 to 759 (KPLIEPTRLIMKVGVRNYEWHEIFPEVKSNA) the chain is on the extracellular side. A helical membrane pass occupies residues 760 to 780 (AAIVAVWAPIMVVYFMDTQIW). Residues 781 to 1544 (YSVYCTIFGG…FDFFRMLSCY (764 aa)) are Cytoplasmic-facing. Residues 1545-1565 (FTTIGFYFSSLISVIGIYIYL) traverse the membrane as a helical segment. At 1566-1595 (YGQLYLVLSGLQKTLILEAKVKNIKSLETA) the chain is on the extracellular side. The helical transmembrane segment at 1596-1616 (LASQSFIQLGLLTGLPMVMEI) threads the bilayer. The Cytoplasmic portion of the chain corresponds to 1617-1620 (GLEK). The chain crosses the membrane as a helical span at residues 1621 to 1641 (GFLIAFQDFILMQLQLAAFFF). Topologically, residues 1642-1688 (TFSLGTKTHYFGRTILHGGAKYRPTGRKVVVFHANFSENYRLYSRSH) are extracellular. An N-linked (GlcNAc...) asparagine glycan is attached at Asn-1676. A helical transmembrane segment spans residues 1689-1709 (FIKGFELMILLVVYELFKHTS). Over 1710-1715 (QSNMAY) the chain is Cytoplasmic. The helical transmembrane segment at 1716–1736 (SFITFSVWFMSFTWLCAPFLF) threads the bilayer. Over 1737 to 1790 (NPSGFTWEIIVGDWRDWNRWIKEQGGIGIQQDKSWQSWWNDEQAHLRGSGVGAR) the chain is Extracellular. The helical transmembrane segment at 1791–1811 (CLEIILSLRFFVYQYGLVYHL) threads the bilayer. The Cytoplasmic segment spans residues 1812 to 1819 (DITQSNTN). The chain crosses the membrane as a helical span at residues 1820–1840 (IIVYALSWVVILATFFTVKAV). Residues 1841–1856 (DLGRQLFSTRKHLVFR) are Extracellular-facing. A helical transmembrane segment spans residues 1857 to 1877 (FFKVFVFVSILTIIITLANIC). The Cytoplasmic segment spans residues 1878–1884 (HLSVKDL). The chain crosses the membrane as a helical span at residues 1885–1905 (LVSCLAFLPTGWGLILIAQAV). Residues 1906–1928 (RPKIEGTSLWEFTQVLARAYDYG) lie on the Extracellular side of the membrane. The helical transmembrane segment at 1929–1949 (MGVVLFAPMAILAWLPIISAF) threads the bilayer. The Cytoplasmic segment spans residues 1950-1976 (QTRFLFNEAFNRRLQIQPILAGKKKNR).

The protein belongs to the glycosyltransferase 48 family.

It is found in the cell membrane. The catalysed reaction is [(1-&gt;3)-beta-D-glucosyl](n) + UDP-alpha-D-glucose = [(1-&gt;3)-beta-D-glucosyl](n+1) + UDP + H(+). Functionally, involved in callose synthesis at the forming cell plate during cytokinesis. During plant growth and development, callose is found as a transitory component of the cell plate in dividing cells, is a major component of pollen mother cell walls and pollen tubes, and is found as a structural component of plasmodesmatal canals. This chain is Putative callose synthase 8 (CALS8), found in Arabidopsis thaliana (Mouse-ear cress).